A 349-amino-acid polypeptide reads, in one-letter code: Probable ethanolamine kinase A (349 aa).

Belongs to the choline/ethanolamine kinase family.

It localises to the cytoplasm. It catalyses the reaction ethanolamine + ATP = phosphoethanolamine + ADP + H(+). It functions in the pathway phospholipid metabolism; phosphatidylethanolamine biosynthesis; phosphatidylethanolamine from ethanolamine: step 1/3. Its function is as follows. Highly specific for ethanolamine phosphorylation. May be a rate-controlling step in phosphatidylethanolamine biosynthesis. The chain is Probable ethanolamine kinase A (etnkA) from Dictyostelium discoideum (Social amoeba).